Consider the following 342-residue polypeptide: S-adenosylmethionine:tRNA ribosyltransferase-isomerase (342 aa).

This sequence belongs to the QueA family. Monomer.

It localises to the cytoplasm. It catalyses the reaction 7-aminomethyl-7-carbaguanosine(34) in tRNA + S-adenosyl-L-methionine = epoxyqueuosine(34) in tRNA + adenine + L-methionine + 2 H(+). The protein operates within tRNA modification; tRNA-queuosine biosynthesis. Transfers and isomerizes the ribose moiety from AdoMet to the 7-aminomethyl group of 7-deazaguanine (preQ1-tRNA) to give epoxyqueuosine (oQ-tRNA). In Streptococcus pyogenes serotype M3 (strain ATCC BAA-595 / MGAS315), this protein is S-adenosylmethionine:tRNA ribosyltransferase-isomerase.